A 61-amino-acid chain; its full sequence is Metallothionein-I, hippocampal (61 aa).

At methionine 1 the chain carries N-acetylmethionine. The beta stretch occupies residues 1 to 29 (MDPNCSCATGDSCACASTCKCKECKCTSC). A divalent metal cation-binding residues include cysteine 5, cysteine 7, cysteine 13, cysteine 15, cysteine 19, cysteine 21, cysteine 24, cysteine 26, cysteine 29, cysteine 33, cysteine 34, cysteine 36, cysteine 37, cysteine 41, cysteine 44, cysteine 48, cysteine 50, and cysteine 57. Positions 30 to 61 (KKSCCSCCPVGCAKCAQGCICKGASDKCSCCA) are alpha. Serine 58 carries the phosphoserine modification. A divalent metal cation is bound by residues cysteine 59 and cysteine 60.

Belongs to the metallothionein superfamily. Type 1 family.

Its function is as follows. Metallothioneins have a high content of cysteine residues that bind various heavy metals; these proteins are transcriptionally regulated by both heavy metals and glucocorticoids. This isoform may play a role in regulating the transport, accumulation, and compartmentation of zinc in the hippocampus. This is Metallothionein-I, hippocampal from Bos taurus (Bovine).